Reading from the N-terminus, the 194-residue chain is Fe/S biogenesis protein NfuA (194 aa).

[4Fe-4S] cluster contacts are provided by C152 and C155.

It belongs to the NfuA family. In terms of assembly, homodimer. [4Fe-4S] cluster serves as cofactor.

Involved in iron-sulfur cluster biogenesis. Binds a 4Fe-4S cluster, can transfer this cluster to apoproteins, and thereby intervenes in the maturation of Fe/S proteins. Could also act as a scaffold/chaperone for damaged Fe/S proteins. In Azotobacter vinelandii (strain DJ / ATCC BAA-1303), this protein is Fe/S biogenesis protein NfuA.